Consider the following 109-residue polypeptide: ATP synthase subunit c (109 aa).

2 helical membrane-spanning segments follow: residues 42–62 (YIGT…QGFS) and 88–108 (LALA…IIFV).

This sequence belongs to the ATPase C chain family. F-type ATPases have 2 components, F(1) - the catalytic core - and F(0) - the membrane proton channel. F(1) has five subunits: alpha(3), beta(3), gamma(1), delta(1), epsilon(1). F(0) has three main subunits: a(1), b(2) and c(10-14). The alpha and beta chains form an alternating ring which encloses part of the gamma chain. F(1) is attached to F(0) by a central stalk formed by the gamma and epsilon chains, while a peripheral stalk is formed by the delta and b chains.

The protein resides in the cell membrane. Functionally, f(1)F(0) ATP synthase produces ATP from ADP in the presence of a proton or sodium gradient. F-type ATPases consist of two structural domains, F(1) containing the extramembraneous catalytic core and F(0) containing the membrane proton channel, linked together by a central stalk and a peripheral stalk. During catalysis, ATP synthesis in the catalytic domain of F(1) is coupled via a rotary mechanism of the central stalk subunits to proton translocation. Its function is as follows. Key component of the F(0) channel; it plays a direct role in translocation across the membrane. A homomeric c-ring of between 10-14 subunits forms the central stalk rotor element with the F(1) delta and epsilon subunits. The chain is ATP synthase subunit c from Ureaplasma parvum serovar 3 (strain ATCC 27815 / 27 / NCTC 11736).